A 351-amino-acid polypeptide reads, in one-letter code: Porphobilinogen deaminase (351 aa).

Residue C242 is modified to S-(dipyrrolylmethanemethyl)cysteine.

The protein belongs to the HMBS family. Monomer. Requires dipyrromethane as cofactor.

It carries out the reaction 4 porphobilinogen + H2O = hydroxymethylbilane + 4 NH4(+). The protein operates within porphyrin-containing compound metabolism; protoporphyrin-IX biosynthesis; coproporphyrinogen-III from 5-aminolevulinate: step 2/4. Its function is as follows. Tetrapolymerization of the monopyrrole PBG into the hydroxymethylbilane pre-uroporphyrinogen in several discrete steps. This Rickettsia rickettsii (strain Sheila Smith) protein is Porphobilinogen deaminase.